Consider the following 322-residue polypeptide: 4-hydroxy-3-methylbut-2-enyl diphosphate reductase (322 aa).

Cys-12 lines the [4Fe-4S] cluster pocket. Residues His-43 and His-81 each coordinate (2E)-4-hydroxy-3-methylbut-2-enyl diphosphate. His-43 and His-81 together coordinate dimethylallyl diphosphate. Positions 43 and 81 each coordinate isopentenyl diphosphate. Cys-103 is a [4Fe-4S] cluster binding site. (2E)-4-hydroxy-3-methylbut-2-enyl diphosphate is bound at residue His-131. His-131 is a binding site for dimethylallyl diphosphate. Residue His-131 coordinates isopentenyl diphosphate. Residue Glu-133 is the Proton donor of the active site. Thr-172 lines the (2E)-4-hydroxy-3-methylbut-2-enyl diphosphate pocket. Cys-200 serves as a coordination point for [4Fe-4S] cluster. 3 residues coordinate (2E)-4-hydroxy-3-methylbut-2-enyl diphosphate: Ser-228, Asn-230, and Ser-273. The dimethylallyl diphosphate site is built by Ser-228, Asn-230, and Ser-273. 3 residues coordinate isopentenyl diphosphate: Ser-228, Asn-230, and Ser-273.

Belongs to the IspH family. The cofactor is [4Fe-4S] cluster.

It carries out the reaction isopentenyl diphosphate + 2 oxidized [2Fe-2S]-[ferredoxin] + H2O = (2E)-4-hydroxy-3-methylbut-2-enyl diphosphate + 2 reduced [2Fe-2S]-[ferredoxin] + 2 H(+). It catalyses the reaction dimethylallyl diphosphate + 2 oxidized [2Fe-2S]-[ferredoxin] + H2O = (2E)-4-hydroxy-3-methylbut-2-enyl diphosphate + 2 reduced [2Fe-2S]-[ferredoxin] + 2 H(+). It functions in the pathway isoprenoid biosynthesis; dimethylallyl diphosphate biosynthesis; dimethylallyl diphosphate from (2E)-4-hydroxy-3-methylbutenyl diphosphate: step 1/1. It participates in isoprenoid biosynthesis; isopentenyl diphosphate biosynthesis via DXP pathway; isopentenyl diphosphate from 1-deoxy-D-xylulose 5-phosphate: step 6/6. Functionally, catalyzes the conversion of 1-hydroxy-2-methyl-2-(E)-butenyl 4-diphosphate (HMBPP) into a mixture of isopentenyl diphosphate (IPP) and dimethylallyl diphosphate (DMAPP). Acts in the terminal step of the DOXP/MEP pathway for isoprenoid precursor biosynthesis. In Macrococcus caseolyticus (strain JCSC5402) (Macrococcoides caseolyticum), this protein is 4-hydroxy-3-methylbut-2-enyl diphosphate reductase.